Here is a 208-residue protein sequence, read N- to C-terminus: Large ribosomal subunit protein bL25 (208 aa).

Residues 1–20 (MANHQIKAQRRKDEGKGASR) are disordered.

This sequence belongs to the bacterial ribosomal protein bL25 family. CTC subfamily. Part of the 50S ribosomal subunit; part of the 5S rRNA/L5/L18/L25 subcomplex. Contacts the 5S rRNA. Binds to the 5S rRNA independently of L5 and L18.

This is one of the proteins that binds to the 5S RNA in the ribosome where it forms part of the central protuberance. This is Large ribosomal subunit protein bL25 from Xylella fastidiosa (strain 9a5c).